A 341-amino-acid polypeptide reads, in one-letter code: GDP-mannose transporter GONST5 (341 aa).

8 helical membrane-spanning segments follow: residues 17 to 37 (LSIL…KWIF), 44 to 64 (FPLS…YIVI), 89 to 109 (FVFC…PVSF), 141 to 161 (LVPI…FNVF), 192 to 212 (INTV…PAFL), 233 to 253 (IILF…FYVI), 260 to 280 (TFNV…WMIF), and 284 to 304 (ISPM…FYGY). Residues 33–152 (NKWIFQKLDF…PIVGGILLTS (120 aa)) enclose the EamA domain.

Belongs to the TPT transporter family. TPT (TC 2.A.7.9) subfamily. In terms of tissue distribution, expressed in rosette leaves, flowers and siliques.

The protein localises to the golgi apparatus membrane. Its function is as follows. GDP-mannose transporter that may be involved in the import of GDP-mannose from the cytoplasm into the Golgi lumen. This Arabidopsis thaliana (Mouse-ear cress) protein is GDP-mannose transporter GONST5 (GONST5).